A 118-amino-acid polypeptide reads, in one-letter code: Endoribonuclease MazF9 (118 aa).

This sequence belongs to the PemK/MazF family. Forms a complex with cognate antitoxin MazE9.

Functionally, toxic component of a type II toxin-antitoxin (TA) system. Upon expression in E.coli and M.smegmatis inhibits cell growth and colony formation. Its toxic effect is neutralized by coexpression with cognate antitoxin MazE9. Acts as an mRNA interferase, specifically cleaving between U and C in UAC sequences. May cleave its cognate antitoxin's gene. In E.coli expression with non-cognate antitoxins VapB27 and VapB40 partially neutralizes the toxin. This chain is Endoribonuclease MazF9 (mazF9), found in Mycobacterium tuberculosis (strain ATCC 25618 / H37Rv).